The primary structure comprises 419 residues: UDP-N-acetylglucosamine 1-carboxyvinyltransferase (419 aa).

22–23 (KN) contacts phosphoenolpyruvate. Arg93 serves as a coordination point for UDP-N-acetyl-alpha-D-glucosamine. Cys117 functions as the Proton donor in the catalytic mechanism. Cys117 bears the 2-(S-cysteinyl)pyruvic acid O-phosphothioketal mark. 2 residues coordinate UDP-N-acetyl-alpha-D-glucosamine: Asp307 and Ile329.

Belongs to the EPSP synthase family. MurA subfamily.

The protein localises to the cytoplasm. It carries out the reaction phosphoenolpyruvate + UDP-N-acetyl-alpha-D-glucosamine = UDP-N-acetyl-3-O-(1-carboxyvinyl)-alpha-D-glucosamine + phosphate. The protein operates within cell wall biogenesis; peptidoglycan biosynthesis. Its function is as follows. Cell wall formation. Adds enolpyruvyl to UDP-N-acetylglucosamine. This Shewanella sp. (strain ANA-3) protein is UDP-N-acetylglucosamine 1-carboxyvinyltransferase.